A 548-amino-acid polypeptide reads, in one-letter code: MAKFMTPVIQDNPSGWGPCAVPEQFRDMPYQPFSKGDRLGKVADWTGATYQDKRYTNKYSSQFGGGSQYAYFHEEDESSFQLVDTARTQKTAYQRNRMRFAQRNLRRDKDRRNMLQFNLQILPKSAKQKERERIRLQKKFQKQFGVRQKWDQKSQKPRDSSVEVRSDWEVKEEMDFPQLMKMRYLEVSEPQDIECCGALEYYDKAFDRITTRSEKPLRSIKRIFHTVTTTDDPVIRKLAKTQGNVFATDAILATLMSCTRSVYSWDIVVQRVGSKLFFDKRDNSDFDLPTVSETANEPPQDEGNSFNSPRNLAMEATYINHNFSQQCLRMGKERYNFPNPNPFVEDDMDKNEIASVAYRYRRWKLGDDIDLIVRCEHDGVMTGANGEVSFINIKTLNEWDSRHCNGVDWRQKLDSQRGAVIATELKNNSYKLARWTCCALLAGSEYLKLGYVSRYHVKDSSRHVILGTQQFKPNEFASQINLSVENAWGILRCVIDICMKLEEGKYLILKDPNKQVIRVYSLPDGTFSSDEDEEEEEEEEEEEEEEET.

An N6-acetyllysine modification is found at Lys-53. Residue Ser-161 is modified to Phosphoserine. Positions 285–299 (DFDLPTVSETANEPP) are RNA gate. Disordered stretches follow at residues 288–309 (LPTVSETANEPPQDEGNSFNSP) and 523–548 (PDGTFSSDEDEEEEEEEEEEEEEEET). A compositionally biased stretch (polar residues) spans 291-309 (VSETANEPPQDEGNSFNSP). Phosphoserine is present on residues Ser-528 and Ser-529. Residues 529–548 (SDEDEEEEEEEEEEEEEEET) show a composition bias toward acidic residues.

This sequence belongs to the eIF-3 subunit D family. In terms of assembly, component of the eukaryotic translation initiation factor 3 (eIF-3) complex, which is composed of 13 subunits: EIF3A, EIF3B, EIF3C, EIF3D, EIF3E, EIF3F, EIF3G, EIF3H, EIF3I, EIF3J, EIF3K, EIF3L and EIF3M. The eIF-3 complex appears to include 3 stable modules: module A is composed of EIF3A, EIF3B, EIF3G and EIF3I; module B is composed of EIF3F, EIF3H, and EIF3M; and module C is composed of EIF3C, EIF3D, EIF3E, EIF3K and EIF3L. EIF3C of module C binds EIF3B of module A and EIF3H of module B, thereby linking the three modules. EIF3J is a labile subunit that binds to the eIF-3 complex via EIF3B. The eIF-3 complex interacts with RPS6KB1 under conditions of nutrient depletion. Mitogenic stimulation leads to binding and activation of a complex composed of MTOR and RPTOR, leading to phosphorylation and release of RPS6KB1 and binding of EIF4B to eIF-3.

The protein localises to the cytoplasm. MRNA cap-binding component of the eukaryotic translation initiation factor 3 (eIF-3) complex, a complex required for several steps in the initiation of protein synthesis of a specialized repertoire of mRNAs. The eIF-3 complex associates with the 40S ribosome and facilitates the recruitment of eIF-1, eIF-1A, eIF-2:GTP:methionyl-tRNAi and eIF-5 to form the 43S pre-initiation complex (43S PIC). The eIF-3 complex stimulates mRNA recruitment to the 43S PIC and scanning of the mRNA for AUG recognition. The eIF-3 complex is also required for disassembly and recycling of post-termination ribosomal complexes and subsequently prevents premature joining of the 40S and 60S ribosomal subunits prior to initiation. The eIF-3 complex specifically targets and initiates translation of a subset of mRNAs involved in cell proliferation, including cell cycling, differentiation and apoptosis, and uses different modes of RNA stem-loop binding to exert either translational activation or repression. In the eIF-3 complex, EIF3D specifically recognizes and binds the 7-methylguanosine cap of a subset of mRNAs. The protein is Eukaryotic translation initiation factor 3 subunit D of Pongo abelii (Sumatran orangutan).